A 356-amino-acid chain; its full sequence is Fructose-1,6-bisphosphatase class 1 1 (356 aa).

Residues glutamate 106, aspartate 129, leucine 131, and aspartate 132 each contribute to the Mg(2+) site. Residues 132 to 135 (DGSS), asparagine 225, tyrosine 258, and lysine 288 each bind substrate. Position 294 (glutamate 294) interacts with Mg(2+).

It belongs to the FBPase class 1 family. Homotetramer. Mg(2+) is required as a cofactor.

The protein resides in the cytoplasm. It catalyses the reaction beta-D-fructose 1,6-bisphosphate + H2O = beta-D-fructose 6-phosphate + phosphate. Its pathway is carbohydrate biosynthesis; gluconeogenesis. This is Fructose-1,6-bisphosphatase class 1 1 from Salinibacter ruber (strain DSM 13855 / M31).